The primary structure comprises 118 residues: Sarafotoxin-i1 (118 aa).

A signal peptide spans 1–23 (MALLPRLAAGGLLLLLALAALDG). A propeptide spanning residues 24 to 84 (KPAPPKLLQK…LSPLRKPQPL (61 aa)) is cleaved from the precursor. Intrachain disulfides connect Cys85–Cys99 and Cys87–Cys95. Residues 112–118 (PSPIQSS) constitute a propeptide that is removed on maturation.

It belongs to the endothelin/sarafotoxin family. Different length molecules ranging from 15 (85-99) to 30 amino acids (85-114) have been found in the venom. As to expression, expressed by the venom gland.

It localises to the secreted. Vasoconstrictor activity. These toxins cause cardiac arrest probably as a result of coronary vasospasm. In terms of biological role, sarafotoxin-i3: vasoconstrictor activity. Causes cardiac arrest probably as a result of coronary vasospasm. Displays low agonistic activities towards endothelin-2 receptor (EDNRB) (displays affinity in the micromolar range). This Atractaspis irregularis (Variable burrowing asp) protein is Sarafotoxin-i1.